The sequence spans 345 residues: Phosphoribosylformylglycinamidine cyclo-ligase (345 aa).

The protein belongs to the AIR synthase family.

The protein resides in the cytoplasm. The catalysed reaction is 2-formamido-N(1)-(5-O-phospho-beta-D-ribosyl)acetamidine + ATP = 5-amino-1-(5-phospho-beta-D-ribosyl)imidazole + ADP + phosphate + H(+). Its pathway is purine metabolism; IMP biosynthesis via de novo pathway; 5-amino-1-(5-phospho-D-ribosyl)imidazole from N(2)-formyl-N(1)-(5-phospho-D-ribosyl)glycinamide: step 2/2. In Escherichia fergusonii (strain ATCC 35469 / DSM 13698 / CCUG 18766 / IAM 14443 / JCM 21226 / LMG 7866 / NBRC 102419 / NCTC 12128 / CDC 0568-73), this protein is Phosphoribosylformylglycinamidine cyclo-ligase.